A 375-amino-acid chain; its full sequence is 23S rRNA (uracil(747)-C(5))-methyltransferase RlmC (375 aa).

Residues cysteine 3, cysteine 11, cysteine 14, and cysteine 87 each coordinate [4Fe-4S] cluster. Glutamine 212, phenylalanine 241, glutamate 262, and asparagine 307 together coordinate S-adenosyl-L-methionine. The active-site Nucleophile is the cysteine 334.

The protein belongs to the class I-like SAM-binding methyltransferase superfamily. RNA M5U methyltransferase family. RlmC subfamily.

The enzyme catalyses uridine(747) in 23S rRNA + S-adenosyl-L-methionine = 5-methyluridine(747) in 23S rRNA + S-adenosyl-L-homocysteine + H(+). Catalyzes the formation of 5-methyl-uridine at position 747 (m5U747) in 23S rRNA. The chain is 23S rRNA (uracil(747)-C(5))-methyltransferase RlmC from Escherichia coli O139:H28 (strain E24377A / ETEC).